Consider the following 225-residue polypeptide: Chalcone--flavanone isomerase 3 (225 aa).

The substrate site is built by Thr51, Asn116, and Thr193.

This sequence belongs to the chalcone isomerase family.

It carries out the reaction a chalcone = a flavanone.. It participates in secondary metabolite biosynthesis; flavonoid biosynthesis. Catalyzes the intramolecular cyclization of bicyclic chalcones into tricyclic (S)-flavanones. Responsible for the isomerization of 4,2',4',6'-tetrahydroxychalcone (also termed chalcone) into naringenin. This Lotus japonicus (Lotus corniculatus var. japonicus) protein is Chalcone--flavanone isomerase 3 (CHI3).